We begin with the raw amino-acid sequence, 99 residues long: Ferredoxin, heterocyst (99 aa).

One can recognise a 2Fe-2S ferredoxin-type domain in the interval 4-96 (YQVRLINKKQ…NCTIKTHQEP (93 aa)). Residues cysteine 42, cysteine 47, cysteine 50, and cysteine 80 each coordinate [2Fe-2S] cluster.

The protein belongs to the 2Fe2S plant-type ferredoxin family. It depends on [2Fe-2S] cluster as a cofactor.

In terms of biological role, ferredoxins are iron-sulfur proteins that transfer electrons in a wide variety of metabolic reactions. Donates electrons to the nitrogenase. This Nostoc sp. (strain PCC 7120 / SAG 25.82 / UTEX 2576) protein is Ferredoxin, heterocyst (fdxH).